We begin with the raw amino-acid sequence, 225 residues long: Uracil-DNA glycosylase (225 aa).

Residue Asp-65 is the Proton acceptor of the active site.

The protein belongs to the uracil-DNA glycosylase (UDG) superfamily. UNG family.

It is found in the cytoplasm. The catalysed reaction is Hydrolyzes single-stranded DNA or mismatched double-stranded DNA and polynucleotides, releasing free uracil.. Excises uracil residues from the DNA which can arise as a result of misincorporation of dUMP residues by DNA polymerase or due to deamination of cytosine. In Bacillus licheniformis (strain ATCC 14580 / DSM 13 / JCM 2505 / CCUG 7422 / NBRC 12200 / NCIMB 9375 / NCTC 10341 / NRRL NRS-1264 / Gibson 46), this protein is Uracil-DNA glycosylase.